The following is a 289-amino-acid chain: S-methyl-5'-thioadenosine phosphorylase (289 aa).

Residues Ser-11, 53-54 (RH), and 86-87 (SA) each bind phosphate. Met-187 serves as a coordination point for substrate. Thr-188 contacts phosphate. 211-213 (DYD) contributes to the substrate binding site.

This sequence belongs to the PNP/MTAP phosphorylase family. MTAP subfamily. Homohexamer. Dimer of a homotrimer.

The enzyme catalyses S-methyl-5'-thioadenosine + phosphate = 5-(methylsulfanyl)-alpha-D-ribose 1-phosphate + adenine. Its pathway is amino-acid biosynthesis; L-methionine biosynthesis via salvage pathway; S-methyl-5-thio-alpha-D-ribose 1-phosphate from S-methyl-5'-thioadenosine (phosphorylase route): step 1/1. Its function is as follows. Catalyzes the reversible phosphorylation of S-methyl-5'-thioadenosine (MTA) to adenine and 5-methylthioribose-1-phosphate. Involved in the breakdown of MTA, a major by-product of polyamine biosynthesis. Responsible for the first step in the methionine salvage pathway after MTA has been generated from S-adenosylmethionine. Has broad substrate specificity with 6-aminopurine nucleosides as preferred substrates. In Thermosynechococcus vestitus (strain NIES-2133 / IAM M-273 / BP-1), this protein is S-methyl-5'-thioadenosine phosphorylase.